We begin with the raw amino-acid sequence, 239 residues long: MPICPLGKVIVFPPVSLAMEDGLLAVGGDLSPYRLLEAYRQGIFPWYSPGEPILWWAPQPRFVLFPDEILLSRSMRQILRKKHFQVTLDRNFDAVIHACATIGRPAQEGTWITEEMQEAYSILHELGYAHSVEVWRDRGLIGGLYGVSLGGCFFGESMFSRESNASKAALIFLSSLLKILRFTLIDCQVYTSHLALLGARFIPRETFTALIRKSLRRPTLRGNWSTHPETADKLPGHEF.

It belongs to the L/F-transferase family.

It is found in the cytoplasm. The catalysed reaction is N-terminal L-lysyl-[protein] + L-leucyl-tRNA(Leu) = N-terminal L-leucyl-L-lysyl-[protein] + tRNA(Leu) + H(+). The enzyme catalyses N-terminal L-arginyl-[protein] + L-leucyl-tRNA(Leu) = N-terminal L-leucyl-L-arginyl-[protein] + tRNA(Leu) + H(+). It catalyses the reaction L-phenylalanyl-tRNA(Phe) + an N-terminal L-alpha-aminoacyl-[protein] = an N-terminal L-phenylalanyl-L-alpha-aminoacyl-[protein] + tRNA(Phe). Functionally, functions in the N-end rule pathway of protein degradation where it conjugates Leu, Phe and, less efficiently, Met from aminoacyl-tRNAs to the N-termini of proteins containing an N-terminal arginine or lysine. This chain is Leucyl/phenylalanyl-tRNA--protein transferase, found in Syntrophus aciditrophicus (strain SB).